The primary structure comprises 606 residues: Mitogen-activated protein kinase kinase kinase 7 (606 aa).

The segment at 1–300 (MSTASAASSS…FPGADEPLQY (300 aa)) is interaction with MAPK8IP1. A Protein kinase domain is found at 36–291 (IEVEEVVGRG…KIMTHLMRYF (256 aa)). Residues 42–50 (VGRGAFGVV) and K63 each bind ATP. Residue K72 forms a Glycyl lysine isopeptide (Lys-Gly) (interchain with G-Cter in ubiquitin) linkage. D156 serves as the catalytic Proton acceptor. A Glycyl lysine isopeptide (Lys-Gly) (interchain with G-Cter in ubiquitin) cross-link involves residue K158. Phosphothreonine; by autocatalysis is present on residues T184 and T187. S192 carries the phosphoserine; by autocatalysis modification. K209 is covalently cross-linked (Glycyl lysine isopeptide (Lys-Gly) (interchain with G-Cter in ubiquitin)). Disordered stretches follow at residues 301–338 (PCQY…MEQV) and 354–391 (KNQA…MSAD). A compositionally biased stretch (polar residues) spans 306–338 (DEGQSNSATSTGSFMDIASTNTSNKSDTNMEQV). The span at 361 to 375 (SESGRLSLGASRGSS) shows a compositional bias: low complexity. S367, S389, and S439 each carry phosphoserine. A compositionally biased stretch (polar residues) spans 443–452 (LTVTGTEPGQ). Residues 443–493 (LTVTGTEPGQVSSRSSSPSVRMITTSGPTSEKPTRSHPWTPDDSTDTNGSD) are disordered. The span at 453–463 (VSSRSSSPSVR) shows a compositional bias: low complexity. The residue at position 455 (S455) is a Phosphoserine. Over residues 464–473 (MITTSGPTSE) the composition is skewed to polar residues.

Belongs to the protein kinase superfamily. STE Ser/Thr protein kinase family. MAP kinase kinase kinase subfamily. As to quaternary structure, can form homodimer. Binds both upstream activators and downstream substrates in multimolecular complexes. Interacts with TAB1/MAP3K7IP1, TAB2/MAP3K7IP2 and TAB3/MAP3K7IP3. Identified in the TRIKA2 complex composed of MAP3K7/TAK1, TAB1/MAP3K7IP1 and TAB2/MAP3K7IP2. Interacts with PPM1L and PPM1B/PP2CB. Interaction with PP2A and PPP6C leads to its repressed activity. Interacts with TRAF6 and TAB1/MAP3K7IP1; during IL-1 signaling. Interacts with TAOK1 and TAOK2; interaction with TAOK2 interferes with MAP3K7 interaction with IKKA, thus preventing NF-kappa-B activation. Interacts with DYNC2I2 (via WD domains). Interacts with CYLD and RBCK1. Interacts with TGFBR1; induces MAP3K7/TAK1 activation by TRAF6. Interacts with MAPK8IP1 and SMAD6. Interacts with isoform 1 of VRK2. Interacts with DAB2; the interaction is induced by TGF-beta stimulation and may mediate TGF-beta stimulated JNK activation. Interacts with TRIM5. Part of a complex containing ITCH, NDFIP1 and MAP3K7. Interacts with IFIT5; the interaction synergizes the recruitment of IKK to MAP3K7 and enhances IKK phosphorylation. Interacts with PLEKHM1 (via N- and C-terminus). Found in a complex with SH3RF1, RAC2, MAP2K7/MKK7, MAPK8IP1/JIP1, MAPK8/JNK1 and MAPK9/JNK2. Interacts with SASH1. Interacts with RIPK1. Mg(2+) serves as cofactor. In terms of processing, association with TAB1/MAP3K7IP1 promotes autophosphorylation at Ser-192 and subsequent activation. Association with TAB2/MAP3K7IP2, itself associated with free unanchored Lys-63 polyubiquitin chain, promotes autophosphorylation and subsequent activation of MAP3K7. Dephosphorylation at Ser-192 by PPM1B/PP2CB and at Thr-187 by PP2A and PPP6C leads to inactivation. Post-translationally, 'Lys-48'-linked polyubiquitination at Lys-72 is induced by TNFalpha, and leads to proteasomal degradation. Undergoes 'Lys-48'-linked polyubiquitination catalyzed by ITCH. 'Lys-63'-linked polyubiquitination at Lys-158 by TRIM8 does not lead to proteasomal degradation but contributes to autophosphorylation and activation. Deubiquitinated by CYLD, a protease that selectively cleaves 'Lys-63'-linked ubiquitin chains. Deubiquitinated by USP19; leading to negative regulation of TNF-alpha- and IL-1beta-triggered NF-kappa-B activation.

The protein localises to the cytoplasm. It is found in the cell membrane. The catalysed reaction is L-seryl-[protein] + ATP = O-phospho-L-seryl-[protein] + ADP + H(+). It catalyses the reaction L-threonyl-[protein] + ATP = O-phospho-L-threonyl-[protein] + ADP + H(+). Its activity is regulated as follows. Activated by pro-inflammatory cytokines and in response to physical and chemical stresses, including osmotic stress, oxidative stress, arsenic and ultraviolet light irradiation. Activated by 'Lys-63'-linked polyubiquitination and by autophosphorylation. Association with TAB1/MAP3K7IP1 and TAB2/MAP3K7IP2 promotes activation through autophosphorylation, whereas PPM1B/PP2CB, PP2A and PPP6C dephosphorylation leads to inactivation. Ceramides are also able to activate MAP3K7/TAK1. In terms of biological role, serine/threonine kinase which acts as an essential component of the MAP kinase signal transduction pathway. Plays an important role in the cascades of cellular responses evoked by changes in the environment. Mediates signal transduction of TRAF6, various cytokines including interleukin-1 (IL-1), transforming growth factor-beta (TGFB), TGFB-related factors like BMP2 and BMP4, toll-like receptors (TLR), tumor necrosis factor receptor CD40 and B-cell receptor (BCR). Once activated, acts as an upstream activator of the MKK/JNK signal transduction cascade and the p38 MAPK signal transduction cascade through the phosphorylation and activation of several MAP kinase kinases like MAP2K1/MEK1, MAP2K3/MKK3, MAP2K6/MKK6 and MAP2K7/MKK7. These MAP2Ks in turn activate p38 MAPKs and c-jun N-terminal kinases (JNKs); both p38 MAPK and JNK pathways control the transcription factors activator protein-1 (AP-1). Independently of MAP2Ks and p38 MAPKs, acts as a key activator of NF-kappa-B by promoting activation of the I-kappa-B-kinase (IKK) core complex. Mechanistically, recruited to polyubiquitin chains of RIPK2 and IKBKG/NEMO via TAB2/MAP3K7IP2 and TAB3/MAP3K7IP3, and catalyzes phosphorylation and activation of IKBKB/IKKB component of the IKK complex, leading to NF-kappa-B activation. In osmotic stress signaling, plays a major role in the activation of MAPK8/JNK1, but not that of NF-kappa-B. Promotes TRIM5 capsid-specific restriction activity. Phosphorylates RIPK1 at 'Ser-321' which positively regulates RIPK1 interaction with RIPK3 to promote necroptosis but negatively regulates RIPK1 kinase activity and its interaction with FADD to mediate apoptosis. Phosphorylates STING1 in response to cGAMP-activation, promoting association between STEEP1 and STING1 and STING1 translocation to COPII vesicles. The sequence is that of Mitogen-activated protein kinase kinase kinase 7 (MAP3K7) from Pongo abelii (Sumatran orangutan).